The following is a 385-amino-acid chain: Deoxyhypusine synthase (385 aa).

NAD(+) contacts are provided by residues Ser108–Ser112, Thr134–Gly136, Glu140, and Asp257. Residue Glu139–Glu140 coordinates spermidine. Residue Asp262 coordinates spermidine. Gly304 is an NAD(+) binding site. His309 lines the spermidine pocket. Position 329-330 (Thr329–Gly330) interacts with NAD(+). Residues Gly335–Asp337 and Glu344–Lys350 each bind spermidine. Lys350 functions as the Nucleophile in the catalytic mechanism. Residue Asp363–Val364 participates in NAD(+) binding.

It belongs to the deoxyhypusine synthase family. NAD(+) serves as cofactor.

It carries out the reaction [eIF5A protein]-L-lysine + spermidine = [eIF5A protein]-deoxyhypusine + propane-1,3-diamine. The protein operates within protein modification; eIF5A hypusination. In terms of biological role, catalyzes the NAD-dependent oxidative cleavage of spermidine and the subsequent transfer of the butylamine moiety of spermidine to the epsilon-amino group of a specific lysine residue of the eIF-5A precursor protein to form the intermediate deoxyhypusine residue. The chain is Deoxyhypusine synthase (DYS1) from Candida glabrata (strain ATCC 2001 / BCRC 20586 / JCM 3761 / NBRC 0622 / NRRL Y-65 / CBS 138) (Yeast).